We begin with the raw amino-acid sequence, 464 residues long: Myrosinase 1 (464 aa).

Gln-19 is a substrate binding site. 2 residues coordinate Zn(2+): His-39 and Asp-52. The substrate site is built by His-122 and Asn-166. Residue Glu-167 is the Nucleophile of the active site. Catalysis depends on Glu-374, which acts as the Proton donor. N-linked (GlcNAc...) asparagine glycosylation occurs at Asn-397.

Homodimer. In terms of tissue distribution, expressed in the skeletal muscle tissues surrounding the head, abdomen and thorax. Not expressed in flight muscles (at protein level).

The catalysed reaction is a thioglucoside + H2O = a sugar + a thiol.. Functionally, hydrolyzes glucosinolates to a labile aglycone. This rapidly undergoes spontaneous rearrangement, eliminating sulfur to yield a number of toxic metabolites. Thereby developing a chemical defense system that exploits and mimics the host plant. This chain is Myrosinase 1, found in Brevicoryne brassicae (Mealy cabbage aphid).